We begin with the raw amino-acid sequence, 367 residues long: Eukaryotic translation initiation factor 3 subunit H (367 aa).

Residues 14 to 166 enclose the MPN domain; the sequence is VQVEALVVMK…LRAFRLSPTF (153 aa).

Belongs to the eIF-3 subunit H family. Component of the eukaryotic translation initiation factor 3 (eIF-3) complex.

Its subcellular location is the cytoplasm. In terms of biological role, component of the eukaryotic translation initiation factor 3 (eIF-3) complex, which is involved in protein synthesis of a specialized repertoire of mRNAs and, together with other initiation factors, stimulates binding of mRNA and methionyl-tRNAi to the 40S ribosome. The eIF-3 complex specifically targets and initiates translation of a subset of mRNAs involved in cell proliferation. The polypeptide is Eukaryotic translation initiation factor 3 subunit H (Botryotinia fuckeliana (strain B05.10) (Noble rot fungus)).